A 126-amino-acid chain; its full sequence is Ribosome-binding factor A (126 aa).

Belongs to the RbfA family. As to quaternary structure, monomer. Binds 30S ribosomal subunits, but not 50S ribosomal subunits or 70S ribosomes.

It is found in the cytoplasm. One of several proteins that assist in the late maturation steps of the functional core of the 30S ribosomal subunit. Associates with free 30S ribosomal subunits (but not with 30S subunits that are part of 70S ribosomes or polysomes). Required for efficient processing of 16S rRNA. May interact with the 5'-terminal helix region of 16S rRNA. This is Ribosome-binding factor A from Halorhodospira halophila (strain DSM 244 / SL1) (Ectothiorhodospira halophila (strain DSM 244 / SL1)).